We begin with the raw amino-acid sequence, 575 residues long: Urease subunit alpha (575 aa).

The Urease domain occupies 138 to 575 (GAVDCHVHLI…LPMTQRYFLF (438 aa)). Positions 143, 145, and 226 each coordinate Ni(2+). At Lys226 the chain carries N6-carboxylysine. His228 lines the substrate pocket. Residues His255 and His281 each coordinate Ni(2+). The active-site Proton donor is His329. A Ni(2+)-binding site is contributed by Asp369.

Belongs to the metallo-dependent hydrolases superfamily. Urease alpha subunit family. As to quaternary structure, heterotrimer of UreA (gamma), UreB (beta) and UreC (alpha) subunits. Three heterotrimers associate to form the active enzyme. The cofactor is Ni cation. In terms of processing, carboxylation allows a single lysine to coordinate two nickel ions.

It is found in the cytoplasm. It catalyses the reaction urea + 2 H2O + H(+) = hydrogencarbonate + 2 NH4(+). Its pathway is nitrogen metabolism; urea degradation; CO(2) and NH(3) from urea (urease route): step 1/1. This chain is Urease subunit alpha, found in Frankia casuarinae (strain DSM 45818 / CECT 9043 / HFP020203 / CcI3).